A 400-amino-acid polypeptide reads, in one-letter code: Phosphoglycerate kinase (400 aa).

Residues 24–26 (DFN), R40, 63–66 (HFGR), R121, and R154 contribute to the substrate site. Residues K205, G296, E327, and 356 to 359 (GGDS) each bind ATP.

This sequence belongs to the phosphoglycerate kinase family. Monomer.

It localises to the cytoplasm. The catalysed reaction is (2R)-3-phosphoglycerate + ATP = (2R)-3-phospho-glyceroyl phosphate + ADP. Its pathway is carbohydrate degradation; glycolysis; pyruvate from D-glyceraldehyde 3-phosphate: step 2/5. The chain is Phosphoglycerate kinase from Thermosynechococcus vestitus (strain NIES-2133 / IAM M-273 / BP-1).